The sequence spans 298 residues: Bifunctional protein FolD (298 aa).

Residues 165–167, Ser190, and Ile231 contribute to the NADP(+) site; that span reads GRS.

The protein belongs to the tetrahydrofolate dehydrogenase/cyclohydrolase family. As to quaternary structure, homodimer.

It carries out the reaction (6R)-5,10-methylene-5,6,7,8-tetrahydrofolate + NADP(+) = (6R)-5,10-methenyltetrahydrofolate + NADPH. The catalysed reaction is (6R)-5,10-methenyltetrahydrofolate + H2O = (6R)-10-formyltetrahydrofolate + H(+). Its pathway is one-carbon metabolism; tetrahydrofolate interconversion. Functionally, catalyzes the oxidation of 5,10-methylenetetrahydrofolate to 5,10-methenyltetrahydrofolate and then the hydrolysis of 5,10-methenyltetrahydrofolate to 10-formyltetrahydrofolate. In Prochlorococcus marinus (strain MIT 9515), this protein is Bifunctional protein FolD.